The following is a 171-amino-acid chain: Protein X (171 aa).

The next 3 helical transmembrane spans lie at 11–31 (SWYQ…IYSL), 38–58 (LAGI…VYLM), and 73–93 (AVIA…WLVI).

Its subcellular location is the virion membrane. This is Protein X (VPX) from Mus musculus domesticus (western European house mouse).